A 386-amino-acid chain; its full sequence is MVTPSLRLVFVKGPREGDALDYKPGSTIRVGRIVRGNEIAIKDAGISTKHLRIESDSGNWVIQDLGSSNGTLLNSNALDPETSVNLGDGDVIKLGEYTSILVNFVIDDFQEKKLTRNNRRQANARKRIRVLESINLGDITEEEKGLDVKFENKPSSRVRKVRKIEDSEKLGITDGLQEDLVEKNGSFRNVESIQSSSVNLIKVEMEDCAMVEENLGRGLKKRVSSKATRSKKIEESVGKACLGVVNVEKVETLKEKRITRATRSKKIDIVGDSYLELDMVLNRARKNKGKNKKADQKPLKSFENDEVTDSGEQGLSCHVEEDMNNELDTDLRKMTLGALFSFLEGHLSKEIIHKTENMIEPMRSKTQRVREYISDQRKVQAKACMC.

The FHA domain occupies 28-78 (IRVGRIVRGNEIAIKDAGISTKHLRIESDSGNWVIQDLGSSNGTLLNSNAL). Positions 286–311 (KNKGKNKKADQKPLKSFENDEVTDSG) are disordered. Positions 292–303 (KKADQKPLKSFE) are enriched in basic and acidic residues.

This Arabidopsis thaliana (Mouse-ear cress) protein is FHA domain-containing protein At4g14490.